Reading from the N-terminus, the 332-residue chain is D-2-hydroxyacid dehydrogenase (NAD(+)) (332 aa).

Active-site residues include arginine 237 and glutamate 266. Histidine 298 (proton donor) is an active-site residue.

It belongs to the D-isomer specific 2-hydroxyacid dehydrogenase family. In terms of assembly, monomer.

It carries out the reaction a (2R)-2-hydroxycarboxylate + NAD(+) = a 2-oxocarboxylate + NADH + H(+). The catalysed reaction is (2R)-hydroxy-4-methylpentanoate + NAD(+) = 4-methyl-2-oxopentanoate + NADH + H(+). Its pathway is amino-acid degradation; L-leucine degradation. Functionally, involved in the reductive branch of L-leucine fermentation. Catalyzes the NADH-dependent reduction of 4-methyl-2-oxopentanoate (2-oxoisocaproate) to (R)-2-hydroxy-4-methylpentanoate ((R)-2-hydroxyisocaproate). For the reverse reaction, the enzyme accepts (R)- but not (S)-2-hydroxy-4-methylpentanoate. Can also use 2-oxopentanoate, 2-oxohexanoate and phenylpyruvate but not 2-oxoisovalerate and 2-oxobutyrate. Cannot use NADPH. This chain is D-2-hydroxyacid dehydrogenase (NAD(+)), found in Clostridioides difficile (Peptoclostridium difficile).